A 228-amino-acid polypeptide reads, in one-letter code: NAD(P)H-hydrate epimerase (228 aa).

Residues 10 to 214 (AIDIDQELFN…DLERKYDLKI (205 aa)) enclose the YjeF N-terminal domain. (6S)-NADPHX is bound at residue 58–62 (NNGGD). N59 and D123 together coordinate K(+). (6S)-NADPHX contacts are provided by residues 127 to 133 (GFSFKPP) and D156. A K(+)-binding site is contributed by S159.

Belongs to the NnrE/AIBP family. K(+) is required as a cofactor.

It catalyses the reaction (6R)-NADHX = (6S)-NADHX. The enzyme catalyses (6R)-NADPHX = (6S)-NADPHX. Catalyzes the epimerization of the S- and R-forms of NAD(P)HX, a damaged form of NAD(P)H that is a result of enzymatic or heat-dependent hydration. This is a prerequisite for the S-specific NAD(P)H-hydrate dehydratase to allow the repair of both epimers of NAD(P)HX. The chain is NAD(P)H-hydrate epimerase from Pediculus humanus subsp. corporis (Body louse).